A 444-amino-acid chain; its full sequence is L-cysteine:1D-myo-inositol 2-amino-2-deoxy-alpha-D-glucopyranoside ligase (444 aa).

Basic and acidic residues predominate over residues M1–H13. The segment at M1–H21 is disordered. Residue C75 participates in Zn(2+) binding. L-cysteinyl-5'-AMP contacts are provided by residues C75–T78, T90, and N113–T115. The short motif at I77 to H87 is the 'HIGH' region element. A 'ERGGDP' region motif is present at residues E219 to P224. Residue W259 coordinates L-cysteinyl-5'-AMP. C263 is a Zn(2+) binding site. Residue G281 to D283 coordinates L-cysteinyl-5'-AMP. H288 is a Zn(2+) binding site. I315 serves as a coordination point for L-cysteinyl-5'-AMP. Residues K321 to S325 carry the 'KMSKS' region motif.

This sequence belongs to the class-I aminoacyl-tRNA synthetase family. MshC subfamily. In terms of assembly, monomer. Requires Zn(2+) as cofactor.

The catalysed reaction is 1D-myo-inositol 2-amino-2-deoxy-alpha-D-glucopyranoside + L-cysteine + ATP = 1D-myo-inositol 2-(L-cysteinylamino)-2-deoxy-alpha-D-glucopyranoside + AMP + diphosphate + H(+). Its function is as follows. Catalyzes the ATP-dependent condensation of GlcN-Ins and L-cysteine to form L-Cys-GlcN-Ins. This Mycolicibacterium gilvum (strain PYR-GCK) (Mycobacterium gilvum (strain PYR-GCK)) protein is L-cysteine:1D-myo-inositol 2-amino-2-deoxy-alpha-D-glucopyranoside ligase.